A 299-amino-acid chain; its full sequence is ATP phosphoribosyltransferase (299 aa).

It belongs to the ATP phosphoribosyltransferase family. Long subfamily. In terms of assembly, equilibrium between an active dimeric form, an inactive hexameric form and higher aggregates. Interconversion between the various forms is largely reversible and is influenced by the natural substrates and inhibitors of the enzyme. Mg(2+) is required as a cofactor.

The protein localises to the cytoplasm. It catalyses the reaction 1-(5-phospho-beta-D-ribosyl)-ATP + diphosphate = 5-phospho-alpha-D-ribose 1-diphosphate + ATP. It functions in the pathway amino-acid biosynthesis; L-histidine biosynthesis; L-histidine from 5-phospho-alpha-D-ribose 1-diphosphate: step 1/9. Its activity is regulated as follows. Feedback inhibited by histidine. Catalyzes the condensation of ATP and 5-phosphoribose 1-diphosphate to form N'-(5'-phosphoribosyl)-ATP (PR-ATP). Has a crucial role in the pathway because the rate of histidine biosynthesis seems to be controlled primarily by regulation of HisG enzymatic activity. The polypeptide is ATP phosphoribosyltransferase (Edwardsiella ictaluri (strain 93-146)).